A 310-amino-acid chain; its full sequence is tRNA-cytidine(32) 2-sulfurtransferase (310 aa).

Residues 58 to 63 carry the PP-loop motif motif; that stretch reads SGGKDS. 3 residues coordinate [4Fe-4S] cluster: C133, C136, and C224.

The protein belongs to the TtcA family. As to quaternary structure, homodimer. Mg(2+) serves as cofactor. [4Fe-4S] cluster is required as a cofactor.

It is found in the cytoplasm. The catalysed reaction is cytidine(32) in tRNA + S-sulfanyl-L-cysteinyl-[cysteine desulfurase] + AH2 + ATP = 2-thiocytidine(32) in tRNA + L-cysteinyl-[cysteine desulfurase] + A + AMP + diphosphate + H(+). It functions in the pathway tRNA modification. Catalyzes the ATP-dependent 2-thiolation of cytidine in position 32 of tRNA, to form 2-thiocytidine (s(2)C32). The sulfur atoms are provided by the cysteine/cysteine desulfurase (IscS) system. In Paracidovorax citrulli (strain AAC00-1) (Acidovorax citrulli), this protein is tRNA-cytidine(32) 2-sulfurtransferase.